Reading from the N-terminus, the 121-residue chain is Small ribosomal subunit protein uS13 (121 aa).

The disordered stretch occupies residues 93–121 (KGLPMRGQRTRTNARTRKGPRRAAQALKK).

It belongs to the universal ribosomal protein uS13 family. Part of the 30S ribosomal subunit. Forms a loose heterodimer with protein S19. Forms two bridges to the 50S subunit in the 70S ribosome.

Located at the top of the head of the 30S subunit, it contacts several helices of the 16S rRNA. In the 70S ribosome it contacts the 23S rRNA (bridge B1a) and protein L5 of the 50S subunit (bridge B1b), connecting the 2 subunits; these bridges are implicated in subunit movement. Contacts the tRNAs in the A and P-sites. This is Small ribosomal subunit protein uS13 from Burkholderia ambifaria (strain ATCC BAA-244 / DSM 16087 / CCUG 44356 / LMG 19182 / AMMD) (Burkholderia cepacia (strain AMMD)).